Here is a 599-residue protein sequence, read N- to C-terminus: Elongation factor 4 (599 aa).

Residues 5–187 (SHIRNFSIIA…RLVQSIPAPE (183 aa)) enclose the tr-type G domain. GTP is bound by residues 17 to 22 (DHGKST) and 134 to 137 (NKMD).

Belongs to the TRAFAC class translation factor GTPase superfamily. Classic translation factor GTPase family. LepA subfamily.

Its subcellular location is the cell inner membrane. The catalysed reaction is GTP + H2O = GDP + phosphate + H(+). Functionally, required for accurate and efficient protein synthesis under certain stress conditions. May act as a fidelity factor of the translation reaction, by catalyzing a one-codon backward translocation of tRNAs on improperly translocated ribosomes. Back-translocation proceeds from a post-translocation (POST) complex to a pre-translocation (PRE) complex, thus giving elongation factor G a second chance to translocate the tRNAs correctly. Binds to ribosomes in a GTP-dependent manner. The sequence is that of Elongation factor 4 from Pseudomonas entomophila (strain L48).